Consider the following 177-residue polypeptide: Thymidine kinase (177 aa).

11–18 (GPMFSGKS) contacts ATP. The active-site Proton acceptor is the glutamate 83. Phenylalanine 113 provides a ligand contact to substrate. The Zn(2+) site is built by cysteine 138 and cysteine 141. 157 to 161 (IEIIG) is a binding site for substrate. Zn(2+) is bound by residues cysteine 170 and cysteine 173.

Belongs to the thymidine kinase family. Homotetramer. Two molecules of substrate bind to each enzyme tetramer.

It carries out the reaction thymidine + ATP = dTMP + ADP + H(+). Phosphorylates thymidine and thymidine analogs, such as azidothymidine (AZT). Part of the salvage pathway for pyrimidine deoxyribonucleotide synthesis. The sequence is that of Thymidine kinase (OPG101) from Vaccinia virus (strain Tian Tan) (VACV).